Reading from the N-terminus, the 164-residue chain is Anterior gradient protein 3 (164 aa).

Residues 1-19 (MYFPMIELTLVLLASSNLA) form the signal peptide. Residues 161–164 (QTEL) carry the Prevents secretion from ER motif.

The protein belongs to the AGR family.

The protein localises to the endoplasmic reticulum. It localises to the cytoplasm. Its function is as follows. Required for calcium-mediated regulation of ciliary beat frequency in the airway. The sequence is that of Anterior gradient protein 3 from Xenopus tropicalis (Western clawed frog).